A 261-amino-acid chain; its full sequence is Carnitinyl-CoA dehydratase (261 aa).

The Nucleophile role is filled by E111. The Proton acceptor role is filled by E131.

Belongs to the enoyl-CoA hydratase/isomerase family.

It catalyses the reaction (R)-carnitinyl-CoA = crotonobetainyl-CoA + H2O. Its pathway is amine and polyamine metabolism; carnitine metabolism. In terms of biological role, catalyzes the reversible dehydration of L-carnitinyl-CoA to crotonobetainyl-CoA. This is Carnitinyl-CoA dehydratase from Escherichia coli (strain SMS-3-5 / SECEC).